A 200-amino-acid chain; its full sequence is ATP synthase subunit b 2 (200 aa).

Positions 1–16 (MAEQNILTTPSPNADT) are enriched in polar residues. A disordered region spans residues 1–38 (MAEQNILTTPSPNADTTIVPPGSPHTHTEQPSGGHGGA). The chain crosses the membrane as a helical span at residues 46 to 66 (TFLAQLIWLALAFGLLYYLMS).

This sequence belongs to the ATPase B chain family. F-type ATPases have 2 components, F(1) - the catalytic core - and F(0) - the membrane proton channel. F(1) has five subunits: alpha(3), beta(3), gamma(1), delta(1), epsilon(1). F(0) has three main subunits: a(1), b(2) and c(10-14). The alpha and beta chains form an alternating ring which encloses part of the gamma chain. F(1) is attached to F(0) by a central stalk formed by the gamma and epsilon chains, while a peripheral stalk is formed by the delta and b chains.

It localises to the cell inner membrane. Its function is as follows. F(1)F(0) ATP synthase produces ATP from ADP in the presence of a proton or sodium gradient. F-type ATPases consist of two structural domains, F(1) containing the extramembraneous catalytic core and F(0) containing the membrane proton channel, linked together by a central stalk and a peripheral stalk. During catalysis, ATP synthesis in the catalytic domain of F(1) is coupled via a rotary mechanism of the central stalk subunits to proton translocation. In terms of biological role, component of the F(0) channel, it forms part of the peripheral stalk, linking F(1) to F(0). The b'-subunit is a diverged and duplicated form of b found in plants and photosynthetic bacteria. This is ATP synthase subunit b 2 (atpF2) from Methylorubrum populi (strain ATCC BAA-705 / NCIMB 13946 / BJ001) (Methylobacterium populi).